A 395-amino-acid polypeptide reads, in one-letter code: Peptide-N(4)-(N-acetyl-beta-glucosaminyl)asparagine amidase (395 aa).

4 residues coordinate Zn(2+): Cys-131, Cys-134, Cys-172, and Cys-175. Catalysis depends on Cys-198, which acts as the Nucleophile. Residues His-232 and Asp-249 contribute to the active site. Glu-252 provides a ligand contact to substrate. The disordered stretch occupies residues 363-395 (PELTKTTPSTDLPSGRQSGSTEWTKSRGENGES). Positions 366-385 (TKTTPSTDLPSGRQSGSTEW) are enriched in polar residues. The segment covering 386–395 (TKSRGENGES) has biased composition (basic and acidic residues).

Belongs to the transglutaminase-like superfamily. PNGase family. The cofactor is Zn(2+).

It localises to the cytoplasm. It carries out the reaction Hydrolysis of an N(4)-(acetyl-beta-D-glucosaminyl)asparagine residue in which the glucosamine residue may be further glycosylated, to yield a (substituted) N-acetyl-beta-D-glucosaminylamine and a peptide containing an aspartate residue.. Functionally, specifically deglycosylates the denatured form of N-linked glycoproteins in the cytoplasm and assists their proteasome-mediated degradation. Cleaves the beta-aspartyl-glucosamine (GlcNAc) of the glycan and the amide side chain of Asn, converting Asn to Asp. Prefers proteins containing high-mannose over those bearing complex type oligosaccharides. Can recognize misfolded proteins in the endoplasmic reticulum that are exported to the cytosol to be destroyed and deglycosylate them, while it has no activity toward native proteins. Deglycosylation is a prerequisite for subsequent proteasome-mediated degradation of some, but not all, misfolded glycoproteins. This is Peptide-N(4)-(N-acetyl-beta-glucosaminyl)asparagine amidase (PNG1) from Candida albicans (strain SC5314 / ATCC MYA-2876) (Yeast).